A 330-amino-acid polypeptide reads, in one-letter code: Succinoglycan biosynthesis protein ExoA (330 aa).

The next 3 helical transmembrane spans lie at 116–136, 260–280, and 299–319; these read ALAT…FSTF, IAFG…VGVW, and YGPL…AGFW.

Belongs to the glycosyltransferase 2 family.

It localises to the cell membrane. It participates in glycan metabolism; exopolysaccharide biosynthesis. Its function is as follows. Glycosyltransferase required for the synthesis of succinoglycan (EPS I). Needed for the addition of the second sugar (glucose). Catalyzes the formation of a beta-1,3 linkage with the galactose lipid carrier. The protein is Succinoglycan biosynthesis protein ExoA (exoA) of Rhizobium meliloti (strain 1021) (Ensifer meliloti).